Here is an 803-residue protein sequence, read N- to C-terminus: Exocyst complex component 6 (803 aa).

Belongs to the SEC15 family. The exocyst complex is composed of EXOC1, EXOC2, EXOC3, EXOC4, EXOC5, EXOC6, EXOC7 and EXOC8. Interacts with CNTRL. Interacts with RAB11A in a GTP-dependent manner.

The protein localises to the cytoplasm. Its subcellular location is the perinuclear region. It localises to the cell projection. The protein resides in the growth cone. It is found in the midbody. The protein localises to the midbody ring. Component of the exocyst complex involved in the docking of exocytic vesicles with fusion sites on the plasma membrane. Together with RAB11A, RAB3IP, RAB8A, PARD3, PRKCI, ANXA2, CDC42 and DNMBP promotes transcytosis of PODXL to the apical membrane initiation sites (AMIS), apical surface formation and lumenogenesis. The protein is Exocyst complex component 6 (EXOC6) of Canis lupus familiaris (Dog).